A 313-amino-acid chain; its full sequence is MDEGVIAVSAMDAFEKLEKVGEGTYGKVYRAREKATGKIVALKKTRLHEDEEGVPSTTLREISILRMLARDPHVVRLMDVKQGLSKEGKTVLYLVFEYMDTDVKKFIRSFRSTGKNIPTQTIKSLMYQLCKGMAFCHGHGILHRDLKPHNLLMDPKTMRLKIADLGLARAFTLPMKKYTHEILTLWYRAPEVLLGATHYSTAVDMWSVGCIFAELVTNQAIFQGDSELQQLLHIFKLFGTPNEEMWPGVSTLKNWHEYPQWKPSTLSSAVPNLDEAGVDLLSKMLQYEPAKRISAKMAMEHPYFDDLPEKSSL.

At methionine 1 the chain carries N-acetylmethionine. Residues 14 to 304 enclose the Protein kinase domain; sequence FEKLEKVGEG…AKMAMEHPYF (291 aa). Residues 20–28 and lysine 43 each bind ATP; that span reads VGEGTYGKV. The residue at position 25 (tyrosine 25) is a Phosphotyrosine. Aspartate 145 (proton acceptor) is an active-site residue. Position 179 is a phosphothreonine (threonine 179).

Belongs to the protein kinase superfamily. CMGC Ser/Thr protein kinase family. CDC2/CDKX subfamily. In terms of assembly, interacts with CYCD4-1 and CKS1. As to expression, expressed in root tips, shoot apical meristem, leaf primordia vascular tissues and tapetum of anthers.

The catalysed reaction is L-seryl-[protein] + ATP = O-phospho-L-seryl-[protein] + ADP + H(+). It carries out the reaction L-threonyl-[protein] + ATP = O-phospho-L-threonyl-[protein] + ADP + H(+). It catalyses the reaction [DNA-directed RNA polymerase] + ATP = phospho-[DNA-directed RNA polymerase] + ADP + H(+). This is Cyclin-dependent kinase B2-1 (CDKB2-1) from Arabidopsis thaliana (Mouse-ear cress).